Reading from the N-terminus, the 216-residue chain is Pyridoxine/pyridoxamine 5'-phosphate oxidase 1 (216 aa).

Substrate-binding positions include 10–13 (RREY) and lysine 68. FMN-binding positions include 63 to 68 (RIVLLK), 78 to 79 (YT), lysine 85, and glutamine 107. 3 residues coordinate substrate: tyrosine 125, arginine 129, and serine 133. FMN is bound by residues 142-143 (QS) and tryptophan 186. 192-194 (RLH) contacts substrate. Arginine 196 contacts FMN.

This sequence belongs to the pyridoxamine 5'-phosphate oxidase family. In terms of assembly, homodimer. The cofactor is FMN.

It carries out the reaction pyridoxamine 5'-phosphate + O2 + H2O = pyridoxal 5'-phosphate + H2O2 + NH4(+). It catalyses the reaction pyridoxine 5'-phosphate + O2 = pyridoxal 5'-phosphate + H2O2. Its pathway is cofactor metabolism; pyridoxal 5'-phosphate salvage; pyridoxal 5'-phosphate from pyridoxamine 5'-phosphate: step 1/1. It functions in the pathway cofactor metabolism; pyridoxal 5'-phosphate salvage; pyridoxal 5'-phosphate from pyridoxine 5'-phosphate: step 1/1. Catalyzes the oxidation of either pyridoxine 5'-phosphate (PNP) or pyridoxamine 5'-phosphate (PMP) into pyridoxal 5'-phosphate (PLP). This is Pyridoxine/pyridoxamine 5'-phosphate oxidase 1 from Hydrogenovibrio crunogenus (strain DSM 25203 / XCL-2) (Thiomicrospira crunogena).